A 162-amino-acid chain; its full sequence is CASP-like protein 1C2 (162 aa).

At 1–6 the chain is on the cytoplasmic side; it reads MMKPKR. Residues 7-27 traverse the membrane as a helical segment; that stretch reads LLSLLLRLIAVGATLAAVIIM. Residues 28–49 lie on the Extracellular side of the membrane; that stretch reads ATSHEKGTFFAVSYEAKYTDTP. The helical transmembrane segment at 50–70 threads the bilayer; it reads AFKYFVIANAIVTVYGFLVLF. Topologically, residues 71-79 are cytoplasmic; that stretch reads HPPGSPLWR. The helical transmembrane segment at 80–100 threads the bilayer; the sequence is LVLALDLVFTMLLISSISAAL. At 101 to 130 the chain is on the extracellular side; the sequence is AVAQVGKNGNSRAGWLPVCGQVTKYCNQVT. The helical transmembrane segment at 131-151 threads the bilayer; sequence GALVAGLIALITYIILLLHSI. At 152 to 162 the chain is on the cytoplasmic side; it reads YTFLNPLLEKA.

Belongs to the Casparian strip membrane proteins (CASP) family. In terms of assembly, homodimer and heterodimers.

It is found in the cell membrane. In Populus trichocarpa (Western balsam poplar), this protein is CASP-like protein 1C2.